Consider the following 398-residue polypeptide: GTPase Obg (398 aa).

Residues 1–159 (MKFVDEAPIS…RNLKLELKVL (159 aa)) form the Obg domain. A disordered region spans residues 128–148 (TRFKSSTNRVPRKTTPGTEGE). Positions 160–333 (ADVGMLGLPN…LSGKIMDHLE (174 aa)) constitute an OBG-type G domain. GTP contacts are provided by residues 166–173 (GLPNAGKS), 191–195 (FTTLV), 213–216 (DIPG), 283–286 (NKID), and 314–316 (SAL). Positions 173 and 193 each coordinate Mg(2+).

This sequence belongs to the TRAFAC class OBG-HflX-like GTPase superfamily. OBG GTPase family. In terms of assembly, monomer. Mg(2+) serves as cofactor.

It localises to the cytoplasm. Functionally, an essential GTPase which binds GTP, GDP and possibly (p)ppGpp with moderate affinity, with high nucleotide exchange rates and a fairly low GTP hydrolysis rate. Plays a role in control of the cell cycle, stress response, ribosome biogenesis and in those bacteria that undergo differentiation, in morphogenesis control. The protein is GTPase Obg of Cellvibrio japonicus (strain Ueda107) (Pseudomonas fluorescens subsp. cellulosa).